Consider the following 91-residue polypeptide: Putative defective replication initiation protein (91 aa).

The chain is Putative defective replication initiation protein (repA1) from Escherichia coli (strain K12).